A 318-amino-acid chain; its full sequence is Protoheme IX farnesyltransferase (318 aa).

Helical transmembrane passes span 29 to 49 (IIPLLLITTAGSMWIAAQGQV), 51 to 71 (PVLLLVTMAGGTLAAASAQTI), 102 to 122 (LIFAIALAVLSFTLLTVFANL), 123 to 143 (LAASLALSGIIFYVLIYTHWL), 151 to 171 (IVIGGAAGAIPALVGWAAVTG), 179 to 199 (LIFAIVFLWTPPHFWALALMI), 219 to 239 (ATVKQIWYYTLITVVATLLLV), 241 to 261 (PLHSSGIVYAAIAISLGAVFI), and 280 to 300 (LFLYSISYMMLLCLGMVIDSL).

Belongs to the UbiA prenyltransferase family. Protoheme IX farnesyltransferase subfamily.

It is found in the cell inner membrane. The catalysed reaction is heme b + (2E,6E)-farnesyl diphosphate + H2O = Fe(II)-heme o + diphosphate. It functions in the pathway porphyrin-containing compound metabolism; heme O biosynthesis; heme O from protoheme: step 1/1. Converts heme B (protoheme IX) to heme O by substitution of the vinyl group on carbon 2 of heme B porphyrin ring with a hydroxyethyl farnesyl side group. This Trichormus variabilis (strain ATCC 29413 / PCC 7937) (Anabaena variabilis) protein is Protoheme IX farnesyltransferase.